A 373-amino-acid polypeptide reads, in one-letter code: WAT1-related protein At4g30420 (373 aa).

10 helical membrane-spanning segments follow: residues 2–22, 29–49, 55–75, 94–114, 125–145, 173–193, 205–225, 244–264, 270–290, and 294–314; these read AMTM…ATLV, VFIL…LYLS, IAIS…SLIG, MGSA…FLAG, GLAK…MTLL, WLIG…WLIL, LSLS…VTFF, CLYA…WAIA, FSAL…ALFF, and IYTG…TVLW. 2 consecutive EamA domains span residues 9–135 and 186–313; these read CYAG…TILC and CWSF…YTVL.

It belongs to the drug/metabolite transporter (DMT) superfamily. Plant drug/metabolite exporter (P-DME) (TC 2.A.7.4) family.

The protein localises to the membrane. This is WAT1-related protein At4g30420 from Arabidopsis thaliana (Mouse-ear cress).